The following is a 144-amino-acid chain: Small ribosomal subunit protein uS11c (144 aa).

Belongs to the universal ribosomal protein uS11 family. Part of the 30S ribosomal subunit.

Its subcellular location is the plastid. It localises to the chloroplast. The sequence is that of Small ribosomal subunit protein uS11c from Oenothera biennis (German evening primrose).